The following is a 246-amino-acid chain: CTD nuclear envelope phosphatase 1 homolog (246 aa).

Residues 3-23 (TIAQSVFCFLAGFFNFFLLYF) form a helical membrane-spanning segment. Residues 53–220 (LTVKRKILVL…LNLLPFLDAL (168 aa)) form the FCP1 homology domain.

Belongs to the dullard family.

The protein resides in the membrane. It is found in the nucleus envelope. It carries out the reaction O-phospho-L-seryl-[protein] + H2O = L-seryl-[protein] + phosphate. The catalysed reaction is O-phospho-L-threonyl-[protein] + H2O = L-threonyl-[protein] + phosphate. In terms of biological role, serine/threonine protein phosphatase that may dephosphorylate and activate lipin-like phosphatases. Lipins are phosphatidate phosphatases that catalyze the conversion of phosphatidic acid to diacylglycerol and control the metabolism of fatty acids at different levels. May indirectly modulate the lipid composition of nuclear and/or endoplasmic reticulum membranes and be required for proper nuclear membrane morphology and/or dynamics. Contributes to closure of nuclear envelope (NE) holes and prevents excess nuclear membranes after meiosis and mitosis, possibly through spatial regulation of lipin. May limit the production of endoplasmic reticulum (ER) sheets proximal to the NE to prevent the ER membranes that feed into NE openings from invading the nuclear interior and thereby restrict nuclear transport to nuclear pore complexes (NPCs). May also indirectly regulate the production of lipid droplets and triacylglycerol. This Caenorhabditis elegans protein is CTD nuclear envelope phosphatase 1 homolog (cnep-1).